Consider the following 190-residue polypeptide: Peptidyl-tRNA hydrolase (190 aa).

Phenylalanine 14 provides a ligand contact to tRNA. The active-site Proton acceptor is histidine 19. TRNA-binding residues include methionine 64, asparagine 66, and asparagine 112.

This sequence belongs to the PTH family. As to quaternary structure, monomer.

Its subcellular location is the cytoplasm. The enzyme catalyses an N-acyl-L-alpha-aminoacyl-tRNA + H2O = an N-acyl-L-amino acid + a tRNA + H(+). Hydrolyzes ribosome-free peptidyl-tRNAs (with 1 or more amino acids incorporated), which drop off the ribosome during protein synthesis, or as a result of ribosome stalling. Its function is as follows. Catalyzes the release of premature peptidyl moieties from peptidyl-tRNA molecules trapped in stalled 50S ribosomal subunits, and thus maintains levels of free tRNAs and 50S ribosomes. The polypeptide is Peptidyl-tRNA hydrolase (Staphylococcus aureus (strain bovine RF122 / ET3-1)).